A 394-amino-acid polypeptide reads, in one-letter code: MKRAILIVLDGVGIGELPDAFKYNDEGSNTLVNTAKVVGGLNLPNMGKMGLSNIEEIPGIPKEEDPIALYGKMAEASPGKDSTTGHWEIAGLILEKPFPVYPNGFPKEIIEAFEKAIGRKVIGNKPASGTEIIKELGEYHMKTGYPIVYTSADSVFQIAAHEDVIPVEELYRMCEIARAMLQGDHAVARVIARPFAGSPGNFYRTPRRRDFSLPPFKPTLLDYLKQNDYDVIGVGKIEDLFAGKGLTSSFHQENNTEGINNIFKAWEKLREGLIFVNLVDFDMLYGHRNDPQGMTRALKEFDDALPDVMGLLSDFDLLIITADHGNDPTTPSTDHSREYVPLLVYSPNFKRTFSLGIRKTFSDLGKTLAEFFEVENDLCGESFLNEIEKGWKGS.

Mn(2+) contacts are provided by Asp-10, Asp-282, His-287, Asp-323, His-324, and His-335.

It belongs to the phosphopentomutase family. Mn(2+) serves as cofactor.

It is found in the cytoplasm. The catalysed reaction is 2-deoxy-alpha-D-ribose 1-phosphate = 2-deoxy-D-ribose 5-phosphate. It carries out the reaction alpha-D-ribose 1-phosphate = D-ribose 5-phosphate. The protein operates within carbohydrate degradation; 2-deoxy-D-ribose 1-phosphate degradation; D-glyceraldehyde 3-phosphate and acetaldehyde from 2-deoxy-alpha-D-ribose 1-phosphate: step 1/2. Functionally, isomerase that catalyzes the conversion of deoxy-ribose 1-phosphate (dRib-1-P) and ribose 1-phosphate (Rib-1-P) to deoxy-ribose 5-phosphate (dRib-5-P) and ribose 5-phosphate (Rib-5-P), respectively. The sequence is that of Phosphopentomutase from Dictyoglomus turgidum (strain DSM 6724 / Z-1310).